We begin with the raw amino-acid sequence, 311 residues long: MANPLYQKHIISINDLSRDDLNLVLATAAKLKANPQPELLKHKVIASCFFEASTRTRLSFETSMHRLSASVVGFSDSANTSLGKKGETLADTISVISTYVDAIVMRHPQEGAARLATEFSGQVPVLNAGDGSNQHPTQTLLDLFTIQETQGRLDNLHIAMVGDLKYGRTVHSLTQALAKFSGNRFYFIAPDALAMPQYILDMLDEKGMAWSLHGSIEEVMADVDILYMTRVQKERLDPSEYANVKAQFVLRASDLNGARENMKVLHPLPRIDEITTDVDKTPHAWYFQQAGNGIFARQALLALVLNSELSL.

Positions 55 and 56 each coordinate carbamoyl phosphate. K85 is an L-aspartate binding site. 3 residues coordinate carbamoyl phosphate: R106, H135, and Q138. Residues R168 and R230 each coordinate L-aspartate. Residues L268 and P269 each coordinate carbamoyl phosphate.

Belongs to the aspartate/ornithine carbamoyltransferase superfamily. ATCase family. As to quaternary structure, heterododecamer (2C3:3R2) of six catalytic PyrB chains organized as two trimers (C3), and six regulatory PyrI chains organized as three dimers (R2).

The catalysed reaction is carbamoyl phosphate + L-aspartate = N-carbamoyl-L-aspartate + phosphate + H(+). The protein operates within pyrimidine metabolism; UMP biosynthesis via de novo pathway; (S)-dihydroorotate from bicarbonate: step 2/3. Its function is as follows. Catalyzes the condensation of carbamoyl phosphate and aspartate to form carbamoyl aspartate and inorganic phosphate, the committed step in the de novo pyrimidine nucleotide biosynthesis pathway. The polypeptide is Aspartate carbamoyltransferase catalytic subunit (Salmonella dublin (strain CT_02021853)).